Consider the following 322-residue polypeptide: RNA-binding motif protein, X-linked 2 (322 aa).

Lys-8 is covalently cross-linked (Glycyl lysine isopeptide (Lys-Gly) (interchain with G-Cter in SUMO2)). One can recognise an RRM domain in the interval 36–114 (AWIFLGGLPY…RTIRVDHVSN (79 aa)). The interval 134–322 (KGCGARTPSP…SSNPSDRWRH (189 aa)) is disordered. Thr-140 carries the phosphothreonine modification. The residue at position 149 (Ser-149) is a Phosphoserine. Positions 155-171 (TKKHKKDKKEKKKKKKE) are enriched in basic residues. Ser-186 and Ser-188 each carry phosphoserine. The segment covering 195–223 (KEKDDTGPKKHSSKNSERAQKSEPREGQK) has biased composition (basic and acidic residues). Ser-232 bears the Phosphoserine mark. Residues 240-274 (RELKKEKPKHEHKSSSRREAREEKTRIRDRGRSSD) are compositionally biased toward basic and acidic residues. Lys-243 participates in a covalent cross-link: Glycyl lysine isopeptide (Lys-Gly) (interchain with G-Cter in SUMO2). Ser-272 carries the phosphoserine modification. The span at 289–308 (YRSRSRSRDKSHRHKRARRS) shows a compositional bias: basic residues. A Phosphoserine modification is found at Ser-314.

The protein belongs to the IST3 family. Part of the activated spliceosome B/catalytic step 1 spliceosome, one of the forms of the spliceosome which has a well-formed active site but still cannot catalyze the branching reaction and is composed of at least 52 proteins, the U2, U5 and U6 snRNAs and the pre-mRNA. Component of the minor spliceosome, which splices U12-type introns.

It localises to the nucleus. Functionally, involved in pre-mRNA splicing as component of the activated spliceosome. As a component of the minor spliceosome, involved in the splicing of U12-type introns in pre-mRNAs. The protein is RNA-binding motif protein, X-linked 2 (RBMX2) of Homo sapiens (Human).